Here is a 355-residue protein sequence, read N- to C-terminus: Guanine nucleotide-binding protein subunit alpha-14 (355 aa).

The region spanning 34–355 is the G-alpha domain; sequence RELKLLLLGT…QLNLREFNLV (322 aa). Positions 37–50 are G1 motif; sequence KLLLLGTGESGKST. Residues 42-49, 176-182, 201-205, 270-273, and alanine 327 each bind GTP; these read GTGESGKS, LRVRVPT, DVGGQ, and NKKD. Mg(2+)-binding residues include serine 49 and threonine 182. Residues 174-182 form a G2 motif region; it reads DVLRVRVPT. Positions 197 to 206 are G3 motif; sequence FRMVDVGGQR. The tract at residues 266 to 273 is G4 motif; the sequence is ILFLNKKD. The interval 325 to 330 is G5 motif; sequence TCATDT.

Belongs to the G-alpha family. G(q) subfamily. In terms of assembly, g proteins are composed of 3 units; alpha, beta and gamma. The alpha chain contains the guanine nucleotide binding site.

In terms of biological role, guanine nucleotide-binding proteins (G proteins) are involved as modulators or transducers in various transmembrane signaling systems. In Bos taurus (Bovine), this protein is Guanine nucleotide-binding protein subunit alpha-14 (GNA14).